Here is a 185-residue protein sequence, read N- to C-terminus: Prenylated Rab acceptor protein 1 (185 aa).

At 1 to 78 (MAAQKDQQKD…RNVEYYQSNY (78 aa)) the chain is on the cytoplasmic side. A required for interaction with prenylated RAB3A and VAMP2 region spans residues 30–54 (AGREWLERRRATIRPWGTFVDQQRF). The next 2 membrane-spanning stretches (helical) occupy residues 79 to 94 (VFVF…VTSP) and 95 to 112 (MLLV…ILYL). Topologically, residues 113 to 131 (RTLQSKLVLFGREVSPAHQ) are cytoplasmic. 2 helical membrane-spanning segments follow: residues 132–148 (YALA…LAGA) and 149–165 (GSAV…LIGS). A required for interaction with GDI1 region spans residues 165–185 (SHAAFHQMEPADGEELQMEPV). Residues 166 to 185 (HAAFHQMEPADGEELQMEPV) lie on the Cytoplasmic side of the membrane. The segment at 175 to 185 (ADGEELQMEPV) is required for interaction with prenylated RAB3A and VAMP2. The segment at 175–185 (ADGEELQMEPV) is homodimerization.

The protein belongs to the PRA1 family. In terms of assembly, homodimer. Interacts with VAMP2 (synaptobrevin-2), GDI1, NRDG1 and PCLO. Interacts with prenylated Rab proteins (including RAB5 and RAB6), and with the members of the Ras superfamily HRAS, RHOA, TC21, and RAP1A.

Its subcellular location is the cell membrane. The protein localises to the cytoplasm. It is found in the golgi apparatus. The protein resides in the cytoplasmic vesicle. It localises to the secretory vesicle. Its subcellular location is the synaptic vesicle. General Rab protein regulator required for vesicle formation from the Golgi complex. May control vesicle docking and fusion by mediating the action of Rab GTPases to the SNARE complexes. In addition it inhibits the removal of Rab GTPases from the membrane by GDI1. The chain is Prenylated Rab acceptor protein 1 (Rabac1) from Mus musculus (Mouse).